The sequence spans 269 residues: 3-methyl-2-oxobutanoate hydroxymethyltransferase (269 aa).

Mg(2+) is bound by residues aspartate 50 and aspartate 89. Residues aspartate 50–serine 51, aspartate 89, and lysine 118 contribute to the 3-methyl-2-oxobutanoate site. Glutamate 120 is a Mg(2+) binding site. Catalysis depends on glutamate 187, which acts as the Proton acceptor.

Belongs to the PanB family. Homodecamer; pentamer of dimers. Mg(2+) is required as a cofactor.

It is found in the cytoplasm. The enzyme catalyses 3-methyl-2-oxobutanoate + (6R)-5,10-methylene-5,6,7,8-tetrahydrofolate + H2O = 2-dehydropantoate + (6S)-5,6,7,8-tetrahydrofolate. Its pathway is cofactor biosynthesis; (R)-pantothenate biosynthesis; (R)-pantoate from 3-methyl-2-oxobutanoate: step 1/2. In terms of biological role, catalyzes the reversible reaction in which hydroxymethyl group from 5,10-methylenetetrahydrofolate is transferred onto alpha-ketoisovalerate to form ketopantoate. The sequence is that of 3-methyl-2-oxobutanoate hydroxymethyltransferase from Aliarcobacter butzleri (strain RM4018) (Arcobacter butzleri).